Reading from the N-terminus, the 711-residue chain is Amyloid beta precursor protein binding family B member 1 (711 aa).

The residue at position 135 (serine 135) is a Phosphoserine. Disordered stretches follow at residues 140–257 (NTQG…SDLP), 277–300 (GTTQWEPPGRASPSQGNSPQEESQ), and 321–364 (EPSE…QRNA). Residues 156–174 (EVEEEDEDEEEEDEEEEDL) show a composition bias toward acidic residues. The residue at position 205 (lysine 205) is an N6-acetyllysine. Positions 224–235 (SWATLSQGSPSY) are enriched in polar residues. A WW domain is found at 254 to 286 (SDLPAGWMRVQDTSGTYYWHIPTGTTQWEPPGR). The segment covering 288–300 (SPSQGNSPQEESQ) has biased composition (polar residues). PID domains follow at residues 365 to 533 (NPGI…QVEF) and 538 to 700 (NELV…LWGS). The residue at position 460 (serine 460) is a Phosphoserine; by PKC. Serine 518 carries the phosphoserine modification. Tyrosine 548 carries the post-translational modification Phosphotyrosine; by ABL1. Residue serine 611 is modified to Phosphoserine; by SGK1. The residue at position 702 (lysine 702) is an N6-acetyllysine.

As to quaternary structure, component of a complex, at least composed of APBB1, RASD1/DEXRAS1 and APP. Interacts (via PID domain 2) with APP (with the intracellular domain of the amyloid-beta precursor protein). Interacts (via PID domain 2) with RASD1/DEXRAS1; impairs the transcription activation activity. Interacts (via PID domain 1) with KAT5/TIP60. Interacts (via the WW domain) with the proline-rich region of APBB1IP. Interacts with TSHZ1 and TSHZ2. Interacts (via the WW domain) with histone H2AX (when phosphorylated on 'Tyr-142') and the proline-rich region of ENAH. Interacts with MAPK8. Interacts (via PID domain 1) with TSHZ3 (via homeobox domain). Interacts with SET. Found in a trimeric complex with HDAC1 and TSHZ3; the interaction between HDAC1 and APBB1 is mediated by TSHZ3. Interacts (via WWW domain) with NEK6. Interacts (via WWW domain) with ABL1. Interacts with RNF157. Interacts with ARF6. In terms of processing, polyubiquitination by RNF157 leads to degradation by the proteasome. Phosphorylation at Ser-611 by SGK1 promotes its localization to the nucleus. Phosphorylated following nuclear translocation. Phosphorylation at Tyr-547 by ABL1 enhances transcriptional activation activity and reduces the affinity for RASD1/DEXRAS1. Phosphorylated at Ser-460 by PKC upon insulin activation. Post-translationally, acetylation at Lys-205 and Lys-702 by KAT5 promotes its transcription activator activity. Brain, not in liver, very low in other tissues. The long (neuron-specific) form is expressed only in brain.

It localises to the cell membrane. Its subcellular location is the cytoplasm. It is found in the nucleus. The protein localises to the cell projection. The protein resides in the growth cone. It localises to the nucleus speckle. Functionally, transcription coregulator that can have both coactivator and corepressor functions. Adapter protein that forms a transcriptionally active complex with the gamma-secretase-derived amyloid precursor protein (APP) intracellular domain. Plays a central role in the response to DNA damage by translocating to the nucleus and inducing apoptosis. May act by specifically recognizing and binding histone H2AX phosphorylated on 'Tyr-142' (H2AXY142ph) at double-strand breaks (DSBs), recruiting other pro-apoptosis factors such as MAPK8/JNK1. Required for histone H4 acetylation at double-strand breaks (DSBs). Its ability to specifically bind modified histones and chromatin modifying enzymes such as KAT5/TIP60, probably explains its transcription activation activity. Functions in association with TSHZ3, SET and HDAC factors as a transcriptional repressor, that inhibits the expression of CASP4. Associates with chromatin in a region surrounding the CASP4 transcriptional start site(s). Involved in hippocampal neurite branching and neuromuscular junction formation, as a result plays a role in spatial memory functioning. Plays a role in the maintenance of lens transparency. May play a role in muscle cell strength. Acts as a molecular adapter that functions in neurite outgrowth by activating the RAC1-ARF6 axis upon insulin treatment. The sequence is that of Amyloid beta precursor protein binding family B member 1 from Rattus norvegicus (Rat).